The primary structure comprises 25 residues: Caerin-1.19 (25 aa).

Leu-25 carries the leucine amide modification.

Belongs to the frog skin active peptide (FSAP) family. Caerin subfamily. As to expression, expressed by the skin dorsal glands.

The protein localises to the secreted. In terms of biological role, caerin-1.19 shows significant activity against Gram-positive organisms, but is less effective against Gram-negative organisms. The polypeptide is Caerin-1.19 (Ranoidea gracilenta (Dainty green tree frog)).